Here is an 813-residue protein sequence, read N- to C-terminus: Cadherin-22 (813 aa).

The signal sequence occupies residues 1 to 33; that stretch reads MRPRPEGALRAGAALSPVLLFLLLLPLLGHLWA. The Extracellular portion of the chain corresponds to 34–621; the sequence is ASTPAPSSLS…AFVMAASLSP (588 aa). Cadherin domains are found at residues 61 to 165, 166 to 274, 275 to 391, 392 to 495, and 496 to 613; these read WVWN…EPRF, LHGP…PPRF, PQKM…PPEF, RPPS…NPPE, and LATP…TTAF. N-linked (GlcNAc...) asparagine glycosylation occurs at asparagine 159. 2 N-linked (GlcNAc...) asparagine glycosylation sites follow: asparagine 463 and asparagine 609. Residues 622 to 642 form a helical membrane-spanning segment; sequence GALIALLVCVLILVVLALLIL. Residues 643–813 are Cytoplasmic-facing; the sequence is TLRRHHKSHL…HRGDDEAPAS (171 aa). The segment at 696-726 is disordered; sequence GGDPGGGAASPPQAASSSERHSLPRGPSSPE.

As to expression, predominantly expressed in brain. Abundant in olfactory bulb, cerebrum, and cerebellum, less in pons, medulla, and spinal cord. Low expression in heart. No expression in lung, liver, spleen, kidney, testis, stomach, intestine, colon, and placenta.

The protein resides in the cell membrane. Cadherins are calcium-dependent cell adhesion proteins. They preferentially interact with themselves in a homophilic manner in connecting cells; cadherins may thus contribute to the sorting of heterogeneous cell types. PB-cadherins may have a role in the morphological organization of pituitary gland and brain tissues. This chain is Cadherin-22 (Cdh22), found in Mus musculus (Mouse).